Here is a 230-residue protein sequence, read N- to C-terminus: V-type proton ATPase subunit E (230 aa).

It belongs to the V-ATPase E subunit family. As to quaternary structure, V-ATPase is a heteromultimeric enzyme composed of a peripheral catalytic V1 complex (components A to H) attached to an integral membrane V0 proton pore complex (components: a, c, c', c'' and d).

Subunit of the peripheral V1 complex of vacuolar ATPase essential for assembly or catalytic function. V-ATPase is responsible for acidifying a variety of intracellular compartments in eukaryotic cells. The polypeptide is V-type proton ATPase subunit E (VATE) (Citrus unshiu (Satsuma mandarin)).